The sequence spans 327 residues: Zinc transport protein ZntB (327 aa).

The Cytoplasmic portion of the chain corresponds to 1-273; the sequence is MEAIKGSDVN…ARRTYTMSLM (273 aa). The helical transmembrane segment at 274-294 threads the bilayer; it reads AMVFLPSTFLTGLFGVNLGGI. Over 295 to 300 the chain is Periplasmic; that stretch reads PGGGWQ. Residues 301–321 form a helical membrane-spanning segment; that stretch reads FGFSIFCILLVVLIGGVALWL. The Cytoplasmic portion of the chain corresponds to 322–327; the sequence is HRSKWL.

It belongs to the CorA metal ion transporter (MIT) (TC 1.A.35) family.

Its subcellular location is the cell inner membrane. It catalyses the reaction Zn(2+)(out) + H(+)(out) = Zn(2+)(in) + H(+)(in). Its function is as follows. Zinc transporter. Acts as a Zn(2+):proton symporter, which likely mediates zinc ion uptake. The chain is Zinc transport protein ZntB from Escherichia coli O6:K15:H31 (strain 536 / UPEC).